The sequence spans 247 residues: tRNA pseudouridine synthase A (247 aa).

The active-site Nucleophile is D52. Position 111 (Y111) interacts with substrate.

This sequence belongs to the tRNA pseudouridine synthase TruA family. As to quaternary structure, homodimer.

It carries out the reaction uridine(38/39/40) in tRNA = pseudouridine(38/39/40) in tRNA. In terms of biological role, formation of pseudouridine at positions 38, 39 and 40 in the anticodon stem and loop of transfer RNAs. The chain is tRNA pseudouridine synthase A from Caulobacter vibrioides (strain ATCC 19089 / CIP 103742 / CB 15) (Caulobacter crescentus).